The following is a 429-amino-acid chain: 3-phosphoshikimate 1-carboxyvinyltransferase (429 aa).

Residues K22, S23, and R27 each coordinate 3-phosphoshikimate. Position 22 (K22) interacts with phosphoenolpyruvate. The phosphoenolpyruvate site is built by G94 and R122. Positions 167, 169, 315, and 342 each coordinate 3-phosphoshikimate. Q169 serves as a coordination point for phosphoenolpyruvate. D315 (proton acceptor) is an active-site residue. Residues R346 and R388 each contribute to the phosphoenolpyruvate site.

It belongs to the EPSP synthase family. In terms of assembly, monomer.

The protein resides in the cytoplasm. The enzyme catalyses 3-phosphoshikimate + phosphoenolpyruvate = 5-O-(1-carboxyvinyl)-3-phosphoshikimate + phosphate. The protein operates within metabolic intermediate biosynthesis; chorismate biosynthesis; chorismate from D-erythrose 4-phosphate and phosphoenolpyruvate: step 6/7. Catalyzes the transfer of the enolpyruvyl moiety of phosphoenolpyruvate (PEP) to the 5-hydroxyl of shikimate-3-phosphate (S3P) to produce enolpyruvyl shikimate-3-phosphate and inorganic phosphate. The protein is 3-phosphoshikimate 1-carboxyvinyltransferase of Geobacter sp. (strain M21).